Reading from the N-terminus, the 365-residue chain is NAD(P)H-quinone oxidoreductase subunit 1, chloroplastic (365 aa).

6 helical membrane-spanning segments follow: residues 32–52 (LFPI…IVWL), 98–118 (YLFS…YLII), 129–149 (LSIG…GLLM), 257–279 (LFYV…LYLG), 302–322 (VFGT…FLFI), and 338–358 (LLNL…LLTT).

It belongs to the complex I subunit 1 family. As to quaternary structure, NDH is composed of at least 16 different subunits, 5 of which are encoded in the nucleus.

Its subcellular location is the plastid. It is found in the chloroplast thylakoid membrane. It catalyses the reaction a plastoquinone + NADH + (n+1) H(+)(in) = a plastoquinol + NAD(+) + n H(+)(out). It carries out the reaction a plastoquinone + NADPH + (n+1) H(+)(in) = a plastoquinol + NADP(+) + n H(+)(out). In terms of biological role, NDH shuttles electrons from NAD(P)H:plastoquinone, via FMN and iron-sulfur (Fe-S) centers, to quinones in the photosynthetic chain and possibly in a chloroplast respiratory chain. The immediate electron acceptor for the enzyme in this species is believed to be plastoquinone. Couples the redox reaction to proton translocation, and thus conserves the redox energy in a proton gradient. This Spinacia oleracea (Spinach) protein is NAD(P)H-quinone oxidoreductase subunit 1, chloroplastic.